Consider the following 361-residue polypeptide: 3-dehydroquinate synthase (361 aa).

It belongs to the archaeal-type DHQ synthase family.

It carries out the reaction 2-amino-2,3,7-trideoxy-D-lyxo-hept-6-ulosonate + NAD(+) + H2O = 3-dehydroquinate + NH4(+) + NADH + H(+). Catalyzes the oxidative deamination and cyclization of 2-amino-3,7-dideoxy-D-threo-hept-6-ulosonic acid (ADH) to yield 3-dehydroquinate (DHQ), which is fed into the canonical shikimic pathway of aromatic amino acid biosynthesis. This is 3-dehydroquinate synthase from Methanococcus maripaludis (strain DSM 14266 / JCM 13030 / NBRC 101832 / S2 / LL).